A 297-amino-acid polypeptide reads, in one-letter code: Band 7 protein AAEL010189 (297 aa).

Polar residues predominate over residues 1–13; it reads MGVVESITNSTKP. Positions 1 to 30 are disordered; that stretch reads MGVVESITNSTKPGVTKKSSPEAEDDSNGE. Residues 37–57 traverse the membrane as a helical segment; sequence ILIFLSWVLVVLTMPFSLLVC.

It belongs to the band 7/mec-2 family.

The protein resides in the membrane. This is Band 7 protein AAEL010189 from Aedes aegypti (Yellowfever mosquito).